Consider the following 261-residue polypeptide: tRNA pseudouridine synthase A (261 aa).

Catalysis depends on aspartate 52, which acts as the Nucleophile. Tyrosine 110 is a binding site for substrate.

Belongs to the tRNA pseudouridine synthase TruA family. As to quaternary structure, homodimer.

It catalyses the reaction uridine(38/39/40) in tRNA = pseudouridine(38/39/40) in tRNA. Its function is as follows. Formation of pseudouridine at positions 38, 39 and 40 in the anticodon stem and loop of transfer RNAs. This is tRNA pseudouridine synthase A from Coxiella burnetii (strain CbuK_Q154) (Coxiella burnetii (strain Q154)).